We begin with the raw amino-acid sequence, 351 residues long: Ferredoxin--NADP reductase (351 aa).

The FAD site is built by Asp44, Gln52, Tyr57, Ile97, Phe132, Asp296, and Ser337.

The protein belongs to the ferredoxin--NADP reductase type 2 family. In terms of assembly, homodimer. It depends on FAD as a cofactor.

The catalysed reaction is 2 reduced [2Fe-2S]-[ferredoxin] + NADP(+) + H(+) = 2 oxidized [2Fe-2S]-[ferredoxin] + NADPH. This Burkholderia vietnamiensis (strain G4 / LMG 22486) (Burkholderia cepacia (strain R1808)) protein is Ferredoxin--NADP reductase.